The sequence spans 200 residues: LHFPL tetraspan subfamily member 6 protein (200 aa).

Residues 1–23 form the signal peptide; that stretch reads MASSLTCTGVIWALLSFLSAATS. Transmembrane regions (helical) follow at residues 84–104, 123–143, and 166–186; these read ICTI…LTAL, GIQF…PLGW, and IGWA…LCTW.

The protein belongs to the LHFP family.

It is found in the membrane. The chain is LHFPL tetraspan subfamily member 6 protein from Mus musculus (Mouse).